The following is a 1241-amino-acid chain: ATP-dependent helicase/nuclease subunit A (1241 aa).

The UvrD-like helicase ATP-binding domain occupies 12–485; sequence SQWTDDQWKA…IDLAKNFRSR (474 aa). Residue 33-40 coordinates ATP; sequence AAAGSGKT. The UvrD-like helicase C-terminal domain maps to 505–805; the sequence is GEIDYDADAE…RIMTIHKSKG (301 aa).

Belongs to the helicase family. AddA subfamily. As to quaternary structure, heterodimer of AddA and AddB/RexB. Mg(2+) is required as a cofactor.

It catalyses the reaction Couples ATP hydrolysis with the unwinding of duplex DNA by translocating in the 3'-5' direction.. The catalysed reaction is ATP + H2O = ADP + phosphate + H(+). In terms of biological role, the heterodimer acts as both an ATP-dependent DNA helicase and an ATP-dependent, dual-direction single-stranded exonuclease. Recognizes the chi site generating a DNA molecule suitable for the initiation of homologous recombination. The AddA nuclease domain is required for chi fragment generation; this subunit has the helicase and 3' -&gt; 5' nuclease activities. This is ATP-dependent helicase/nuclease subunit A from Bacillus cereus (strain ATCC 10987 / NRS 248).